The following is a 248-amino-acid chain: Granulin (248 aa).

Belongs to the polyhedrin family.

Functionally, component of the virus occlusion bodies, which are large proteinaceous structures, that protect the virus from the outside environment for extended periods until they are ingested by insect larvae. The chain is Granulin from Choristoneura fumiferana (Spruce budworm moth).